Consider the following 108-residue polypeptide: Insulin (108 aa).

Positions 1-21 are cleaved as a signal peptide; sequence MAVWLQAGALLVLLVVSSVST. 3 disulfide bridges follow: C30/C94, C42/C107, and C93/C98. Residues 54–84 constitute a propeptide, c peptide; sequence DVEPLLGFLPPKSAQETEVADFAFKDHAELI.

Belongs to the insulin family. As to quaternary structure, heterodimer of a B chain and an A chain linked by two disulfide bonds.

It localises to the secreted. In terms of biological role, insulin decreases blood glucose concentration. It increases cell permeability to monosaccharides, amino acids and fatty acids. It accelerates glycolysis, the pentose phosphate cycle, and glycogen synthesis in liver. This chain is Insulin (ins), found in Danio rerio (Zebrafish).